The sequence spans 185 residues: Ribonuclease M5 1 (185 aa).

The Toprim domain maps to 4 to 87 (KEVIVVEGKD…AFLTKHDAAP (84 aa)). 3 residues coordinate Mg(2+): E10, D56, and D58.

Belongs to the ribonuclease M5 family. Mg(2+) is required as a cofactor.

Its subcellular location is the cytoplasm. The enzyme catalyses Endonucleolytic cleavage of RNA, removing 21 and 42 nucleotides, respectively, from the 5'- and 3'-termini of a 5S-rRNA precursor.. Required for correct processing of both the 5' and 3' ends of 5S rRNA precursor. Cleaves both sides of a double-stranded region yielding mature 5S rRNA in one step. This Ligilactobacillus salivarius (strain UCC118) (Lactobacillus salivarius) protein is Ribonuclease M5 1.